We begin with the raw amino-acid sequence, 272 residues long: Putative phosphatase HI_0597 (272 aa).

Asp-11 acts as the Nucleophile in catalysis. Asp-11 contacts Mg(2+). Leu-12 serves as a coordination point for phosphate. Asp-13 contacts Mg(2+). Residues 45–46 and Lys-195 contribute to the phosphate site; that span reads TG. Asp-218 serves as a coordination point for Mg(2+). Asn-221 is a phosphate binding site.

The protein belongs to the HAD-like hydrolase superfamily. Cof family. The cofactor is Mg(2+).

In Haemophilus influenzae (strain ATCC 51907 / DSM 11121 / KW20 / Rd), this protein is Putative phosphatase HI_0597.